Here is a 513-residue protein sequence, read N- to C-terminus: Cytochrome P450 monooxygenase eqxH (513 aa).

A helical transmembrane segment spans residues 13-32 (QYAILCGITVFTLFIVQLSL). N-linked (GlcNAc...) asparagine glycans are attached at residues asparagine 130 and asparagine 295. Cysteine 449 serves as a coordination point for heme.

The protein belongs to the cytochrome P450 family. Requires heme as cofactor.

Its subcellular location is the membrane. It participates in mycotoxin biosynthesis. Functionally, cytochrome P450 monooxygenase; part of the gene cluster that mediates the biosynthesis of equisetin, a trans-fused decalin-containing tetramic acid with antimicrobial activity. The PKS module of eqxS together with the enoylreductase eqxC catalyze the formation of the polyketide unit which is then conjugated to L-serine by the condensation domain of the eqxS NRPS module. Activity of the Dieckmann cyclase domain (RED) results in release of the Dieckmann product intermediate. Diels-Alderase eqx3 is involved in endo-selective Diels-Alder cycloaddition to form the decalin ring, leading to the production of N-desmethylequisetin also called trichosetin. Subsequent N-methylation is carried out by eqxD to give equisetin. The sequence is that of Cytochrome P450 monooxygenase eqxH from Fusarium heterosporum.